A 727-amino-acid chain; its full sequence is Glucans biosynthesis glucosyltransferase H (727 aa).

Positions 18-38 (SAMPNERPGAMEPQNLSKMPE) are disordered. A run of 7 helical transmembrane segments spans residues 58–78 (FLVV…MGAV), 97–117 (VNFC…LILL), 278–298 (LQQF…GWWV), 408–428 (IMAY…LMLA), 460–480 (LFYI…LLLL), 496–516 (IFSV…MMFI), and 572–592 (LLAW…ISAW).

Belongs to the glycosyltransferase 2 family. OpgH subfamily.

It localises to the cell inner membrane. The protein operates within glycan metabolism; osmoregulated periplasmic glucan (OPG) biosynthesis. Functionally, involved in the biosynthesis of osmoregulated periplasmic glucans (OPGs). The sequence is that of Glucans biosynthesis glucosyltransferase H from Shewanella baltica (strain OS185).